The primary structure comprises 228 residues: Methylthioribulose-1-phosphate dehydratase (228 aa).

A substrate-binding site is contributed by Cys92. Zn(2+)-binding residues include His110 and His112. Glu135 serves as the catalytic Proton donor/acceptor. His192 serves as a coordination point for Zn(2+).

It belongs to the aldolase class II family. MtnB subfamily. Zn(2+) serves as cofactor.

It localises to the cytoplasm. Its subcellular location is the nucleus. It carries out the reaction 5-(methylsulfanyl)-D-ribulose 1-phosphate = 5-methylsulfanyl-2,3-dioxopentyl phosphate + H2O. It participates in amino-acid biosynthesis; L-methionine biosynthesis via salvage pathway; L-methionine from S-methyl-5-thio-alpha-D-ribose 1-phosphate: step 2/6. Catalyzes the dehydration of methylthioribulose-1-phosphate (MTRu-1-P) into 2,3-diketo-5-methylthiopentyl-1-phosphate (DK-MTP-1-P). The polypeptide is Methylthioribulose-1-phosphate dehydratase (Schizosaccharomyces pombe (strain 972 / ATCC 24843) (Fission yeast)).